A 44-amino-acid polypeptide reads, in one-letter code: Photosystem I reaction center subunit IX (44 aa).

A helical membrane pass occupies residues 7–27; that stretch reads YLSVAPVLATLWFGSLAGLLI.

Belongs to the PsaJ family.

The protein localises to the plastid. Its subcellular location is the chloroplast thylakoid membrane. May help in the organization of the PsaE and PsaF subunits. The polypeptide is Photosystem I reaction center subunit IX (Piper cenocladum (Ant piper)).